The chain runs to 411 residues: Flagellum-associated coiled-coil domain-containing protein 1 (411 aa).

Residues Ser-52–Pro-77 are disordered. A compositionally biased stretch (basic and acidic residues) spans Pro-61–Asn-74. 2 coiled-coil regions span residues Ser-124–Met-220 and Asn-278–Glu-328. Lys-353 is modified (N6-acetyllysine). Positions Phe-355–Leu-385 form a coiled coil.

The protein localises to the cytoplasm. Its subcellular location is the cytoplasmic granule. It is found in the cell projection. It localises to the cilium. The protein resides in the flagellum. The polypeptide is Flagellum-associated coiled-coil domain-containing protein 1 (Rattus norvegicus (Rat)).